Here is a 137-residue protein sequence, read N- to C-terminus: Large ribosomal subunit protein bL17 (137 aa).

This sequence belongs to the bacterial ribosomal protein bL17 family. In terms of assembly, part of the 50S ribosomal subunit. Contacts protein L32.

This chain is Large ribosomal subunit protein bL17, found in Caulobacter sp. (strain K31).